A 219-amino-acid polypeptide reads, in one-letter code: Ras-related protein Rab-3D (219 aa).

N-acetylalanine is present on alanine 2. 29-37 (GNSSVGKTS) lines the GDP pocket. Residues serine 31, serine 32, valine 33, glycine 34, lysine 35, threonine 36, serine 37, proline 49, and serine 53 each contribute to the GTP site. Position 36 (threonine 36) interacts with Mg(2+). The short motif at 49–58 (PAFVSTVGID) is the Switch 1 element. 2 residues coordinate Mg(2+): threonine 54 and aspartate 77. Glycine 80 provides a ligand contact to GTP. A Switch 2 motif is present at residues 80-96 (GQERYRTITTAYYRGAM). Threonine 86 carries the phosphothreonine; by LRRK2 modification. GTP contacts are provided by asparagine 135, lysine 136, aspartate 138, alanine 166, and lysine 167. GDP is bound by residues 135–138 (NKCD) and 165–167 (SAK). Serine 190 is subject to Phosphoserine. The segment covering 190–199 (SLEPSSSSGS) has biased composition (low complexity). Residues 190 to 219 (SLEPSSSSGSNGKGPAVGDAPAPQPSSCSC) are disordered. 2 S-geranylgeranyl cysteine lipidation sites follow: cysteine 217 and cysteine 219. Cysteine 219 is modified (cysteine methyl ester).

It belongs to the small GTPase superfamily. Rab family. Interacts with RIMS1, RIMS2, RPH3A, RPH3AL and RAB3IP. The GTP-bound form interacts with REP15. Interacts with CHM and CHML; phosphorylation at Thr-86 disrupts these interactions. Interacts with MADD (via uDENN domain); the GTP-bound form is preferred for interaction. Mg(2+) serves as cofactor. Post-translationally, phosphorylation of Thr-86 in the switch II region by LRRK2 prevents the association of RAB regulatory proteins, including CHM and CHML. Highly expressed in granulocytes of peripheral blood. Constitutively expressed at low levels in all hematopoietic cell lines investigated.

Its subcellular location is the cell membrane. It carries out the reaction GTP + H2O = GDP + phosphate + H(+). With respect to regulation, regulated by guanine nucleotide exchange factors (GEFs) which promote the exchange of bound GDP for free GTP. Regulated by GTPase activating proteins (GAPs) which increase the GTP hydrolysis activity. Inhibited by GDP dissociation inhibitors (GDIs) which prevent Rab-GDP dissociation. The small GTPases Rab are key regulators of intracellular membrane trafficking, from the formation of transport vesicles to their fusion with membranes. Rabs cycle between an inactive GDP-bound form and an active GTP-bound form that is able to recruit to membranes different sets of downstream effectors directly responsible for vesicle formation, movement, tethering and fusion. RAB3D may be involved in the insulin-induced exocytosis of GLUT4-containing vesicles in adipocytes. The protein is Ras-related protein Rab-3D of Homo sapiens (Human).